Reading from the N-terminus, the 50-residue chain is Protein hunchback (50 aa).

3 C2H2-type zinc fingers span residues 1 to 5 (HILKH), 11 to 33 (IRCP…MKSH), and 39 to 50 (YRCLDCNYATKY).

This sequence belongs to the hunchback C2H2-type zinc-finger protein family.

It localises to the nucleus. In terms of biological role, gap class segmentation protein that controls development of head structures. The chain is Protein hunchback (hb) from Bradysia coprophila (Dark-winged fungus gnat).